Reading from the N-terminus, the 191-residue chain is Fe/S biogenesis protein NfuA (191 aa).

[4Fe-4S] cluster-binding residues include Cys149 and Cys152.

The protein belongs to the NfuA family. Homodimer. [4Fe-4S] cluster serves as cofactor.

In terms of biological role, involved in iron-sulfur cluster biogenesis. Binds a 4Fe-4S cluster, can transfer this cluster to apoproteins, and thereby intervenes in the maturation of Fe/S proteins. Could also act as a scaffold/chaperone for damaged Fe/S proteins. The protein is Fe/S biogenesis protein NfuA of Yersinia enterocolitica serotype O:8 / biotype 1B (strain NCTC 13174 / 8081).